Here is a 360-residue protein sequence, read N- to C-terminus: GTPase Obg (360 aa).

Positions 1–156 (MFVDSVEIII…KCVRLELKLI (156 aa)) constitute an Obg domain. The 204-residue stretch at 157–360 (ADIGLVGFPN…LKFVLLEALP (204 aa)) folds into the OBG-type G domain. GTP contacts are provided by residues 163-170 (GFPNAGKS), 188-192 (FTTLV), 210-213 (DIPG), 279-282 (NKCD), and 341-343 (SAV). The Mg(2+) site is built by S170 and T190.

The protein belongs to the TRAFAC class OBG-HflX-like GTPase superfamily. OBG GTPase family. As to quaternary structure, monomer. Mg(2+) serves as cofactor.

Its subcellular location is the cytoplasm. In terms of biological role, an essential GTPase which binds GTP, GDP and possibly (p)ppGpp with moderate affinity, with high nucleotide exchange rates and a fairly low GTP hydrolysis rate. Plays a role in control of the cell cycle, stress response, ribosome biogenesis and in those bacteria that undergo differentiation, in morphogenesis control. The protein is GTPase Obg of Helicobacter pylori (strain ATCC 700392 / 26695) (Campylobacter pylori).